The sequence spans 442 residues: GTPase Der (442 aa).

2 consecutive EngA-type G domains span residues 2 to 167 and 175 to 351; these read RTIA…PIQN and FKFC…EQAM. Residues 8–15, 55–59, 119–122, 181–188, 228–232, and 293–296 each bind GTP; these read GKPNVGKS, DTGGI, NKIE, GRPNVGKS, DTAGI, and NKWD. Residues 352-436 enclose the KH-like domain; that stretch reads RKIATSLLND…PITLYWQDKN (85 aa).

Belongs to the TRAFAC class TrmE-Era-EngA-EngB-Septin-like GTPase superfamily. EngA (Der) GTPase family. In terms of assembly, associates with the 50S ribosomal subunit.

In terms of biological role, GTPase that plays an essential role in the late steps of ribosome biogenesis. This Ureaplasma parvum serovar 3 (strain ATCC 27815 / 27 / NCTC 11736) protein is GTPase Der.